A 166-amino-acid polypeptide reads, in one-letter code: 3-isopropylmalate dehydratase small subunit (166 aa).

The protein belongs to the LeuD family. LeuD type 2 subfamily. In terms of assembly, heterodimer of LeuC and LeuD.

It carries out the reaction (2R,3S)-3-isopropylmalate = (2S)-2-isopropylmalate. It functions in the pathway amino-acid biosynthesis; L-leucine biosynthesis; L-leucine from 3-methyl-2-oxobutanoate: step 2/4. Catalyzes the isomerization between 2-isopropylmalate and 3-isopropylmalate, via the formation of 2-isopropylmaleate. The sequence is that of 3-isopropylmalate dehydratase small subunit from Nautilia profundicola (strain ATCC BAA-1463 / DSM 18972 / AmH).